A 448-amino-acid chain; its full sequence is GTPase Der (448 aa).

2 EngA-type G domains span residues 2-171 and 181-364; these read FTVV…PDTQ and PKIA…EEYS. GTP contacts are provided by residues 8–15, 58–62, 123–126, 187–194, 234–238, and 305–308; these read GRPNVGKS, DTGGF, NKID, DTAGI, and NKWD. Residues 365–448 enclose the KH-like domain; that stretch reads KRVSTSELNR…PINIKIKQRK (84 aa).

Belongs to the TRAFAC class TrmE-Era-EngA-EngB-Septin-like GTPase superfamily. EngA (Der) GTPase family. In terms of assembly, associates with the 50S ribosomal subunit.

In terms of biological role, GTPase that plays an essential role in the late steps of ribosome biogenesis. This is GTPase Der from Thermodesulfovibrio yellowstonii (strain ATCC 51303 / DSM 11347 / YP87).